A 602-amino-acid polypeptide reads, in one-letter code: UvrABC system protein C (602 aa).

The GIY-YIG domain occupies 15-100; sequence DQSGVYHYFD…IKQLKPKYNI (86 aa). The UVR domain occupies 206–241; that stretch reads SKLISRLKERMEKLAENLRFEEAGELRDRIEKIKRI.

The protein belongs to the UvrC family. In terms of assembly, interacts with UvrB in an incision complex.

The protein resides in the cytoplasm. The UvrABC repair system catalyzes the recognition and processing of DNA lesions. UvrC both incises the 5' and 3' sides of the lesion. The N-terminal half is responsible for the 3' incision and the C-terminal half is responsible for the 5' incision. The polypeptide is UvrABC system protein C (Wolinella succinogenes (strain ATCC 29543 / DSM 1740 / CCUG 13145 / JCM 31913 / LMG 7466 / NCTC 11488 / FDC 602W) (Vibrio succinogenes)).